A 365-amino-acid chain; its full sequence is 3-amino-4-hydroxybenzoate 4-O-methyltransferase (365 aa).

The segment covering 1–18 has biased composition (polar residues); sequence MTVPENAQHTAPDQTQHT. The tract at residues 1-32 is disordered; sequence MTVPENAQHTAPDQTQHTAPDRTRQAQQAAPD. S-adenosyl-L-methionine is bound by residues Asp-227, 253–255, and Arg-270; that span reads GDF. His-273 serves as the catalytic Proton acceptor.

This sequence belongs to the class I-like SAM-binding methyltransferase superfamily. Cation-independent O-methyltransferase family.

It carries out the reaction 3-amino-2,4-dihydroxybenzoate + S-adenosyl-L-methionine = 3-amino-2-hydroxy-4-methoxybenzoate + S-adenosyl-L-homocysteine + H(+). It participates in antibiotic biosynthesis. Functionally, part of a gene cluster involved in the biosynthesis of cremeomycin, a light-sensitive o-diazoquinone with antibacterial and antiproliferative effects. Catalyzes the methylation of the C4 hydroxyl group of 3-amino-2,4-dihydroxybenzoate (3,2,4-ADHBA) to form 3-amino-2-hydroxy-4-methoxybenzoate (3,2,4-AHMBA). In vitro, can also catalyze the methylation of 3-amino-4-hydroxybenzoate (3,4-AHBA). This is 3-amino-4-hydroxybenzoate 4-O-methyltransferase from Streptomyces cremeus.